The following is a 379-amino-acid chain: Chaperone protein DnaJ (379 aa).

The region spanning 5-70 (DYYELLEVSR…QKRAAYDQFG (66 aa)) is the J domain. The segment at 135 to 213 (GKEVEITVPR…CHGQGRVRES (79 aa)) adopts a CR-type zinc-finger fold. C148, C151, C165, C168, C187, C190, C201, and C204 together coordinate Zn(2+). CXXCXGXG motif repeat units follow at residues 148–155 (CTVCEGSG), 165–172 (CETCQGMG), 187–194 (CPTCHGEG), and 201–208 (CASCHGQG).

This sequence belongs to the DnaJ family. As to quaternary structure, homodimer. It depends on Zn(2+) as a cofactor.

The protein localises to the cytoplasm. Participates actively in the response to hyperosmotic and heat shock by preventing the aggregation of stress-denatured proteins and by disaggregating proteins, also in an autonomous, DnaK-independent fashion. Unfolded proteins bind initially to DnaJ; upon interaction with the DnaJ-bound protein, DnaK hydrolyzes its bound ATP, resulting in the formation of a stable complex. GrpE releases ADP from DnaK; ATP binding to DnaK triggers the release of the substrate protein, thus completing the reaction cycle. Several rounds of ATP-dependent interactions between DnaJ, DnaK and GrpE are required for fully efficient folding. Also involved, together with DnaK and GrpE, in the DNA replication of plasmids through activation of initiation proteins. The chain is Chaperone protein DnaJ from Legionella pneumophila (strain Corby).